Here is a 289-residue protein sequence, read N- to C-terminus: ATP synthase gamma chain (289 aa).

The protein belongs to the ATPase gamma chain family. In terms of assembly, F-type ATPases have 2 components, CF(1) - the catalytic core - and CF(0) - the membrane proton channel. CF(1) has five subunits: alpha(3), beta(3), gamma(1), delta(1), epsilon(1). CF(0) has three main subunits: a, b and c.

It localises to the cell inner membrane. Its function is as follows. Produces ATP from ADP in the presence of a proton gradient across the membrane. The gamma chain is believed to be important in regulating ATPase activity and the flow of protons through the CF(0) complex. This chain is ATP synthase gamma chain, found in Cereibacter sphaeroides (strain ATCC 17025 / ATH 2.4.3) (Rhodobacter sphaeroides).